Reading from the N-terminus, the 238-residue chain is Ribitol-5-phosphate cytidylyltransferase (238 aa).

Residues Leu-7–Gly-10 and Gly-81–Thr-87 each bind CTP.

Belongs to the IspD/TarI cytidylyltransferase family. TarI subfamily.

The catalysed reaction is D-ribitol 5-phosphate + CTP + H(+) = CDP-L-ribitol + diphosphate. The protein operates within cell wall biogenesis; poly(ribitol phosphate) teichoic acid biosynthesis. Catalyzes the transfer of the cytidylyl group of CTP to D-ribitol 5-phosphate. This chain is Ribitol-5-phosphate cytidylyltransferase, found in Staphylococcus saprophyticus subsp. saprophyticus (strain ATCC 15305 / DSM 20229 / NCIMB 8711 / NCTC 7292 / S-41).